A 129-amino-acid polypeptide reads, in one-letter code: Profilin-4 (129 aa).

The protein belongs to the profilin family. In terms of tissue distribution, expressed in testis, in germ cells in seminiferous tubules (at protein level).

The protein resides in the cytoplasm. Its function is as follows. Involved in male fertility. Required for manchette development and acrosome biogenesis during spermiogenesis. Binds in vitro to phospholipids, including phosphatidylinositol 3-phosphate (PtdIns(3)P), phosphatidylinositol 4,5-bisphosphate (PtdIns(4,5)P2), phosphatidylinositol 4-phosphate (PtdIns(4)P) and phosphatidic acid (PA). Contrary to other profilin family members, does not bind to actin in vitro. The polypeptide is Profilin-4 (Pfn4) (Mus musculus (Mouse)).